A 232-amino-acid chain; its full sequence is Lipid A 1-phosphatase (232 aa).

The next 6 helical transmembrane spans lie at 10 to 30, 42 to 62, 80 to 100, 136 to 156, 160 to 180, and 183 to 203; these read LFIT…PVGA, ELLT…LLFF, ALYV…SGLL, FPSG…LLFP, VAFI…GAHY, and DVIA…IVYA.

The protein belongs to the lipid A LpxE 1-phosphatase family.

Its subcellular location is the cell inner membrane. Its pathway is bacterial outer membrane biogenesis; LPS lipid A biosynthesis. Its function is as follows. Probably removes the 1-phosphate moiety from lipid A species. Does not seem to act on other membrane components, nor does it dephosphorylate the 4'-phosphate group of lipid A and/or lipid A precursors. The chain is Lipid A 1-phosphatase from Rhizobium etli (strain ATCC 51251 / DSM 11541 / JCM 21823 / NBRC 15573 / CFN 42).